A 154-amino-acid chain; its full sequence is Ribonuclease H (154 aa).

One can recognise an RNase H type-1 domain in the interval 9 to 150 (SHPHIIIYTD…ADALANKGVE (142 aa)). Mg(2+)-binding residues include Asp18, Glu56, Asp78, and Asp142.

The protein belongs to the RNase H family. As to quaternary structure, monomer. It depends on Mg(2+) as a cofactor.

The protein localises to the cytoplasm. It catalyses the reaction Endonucleolytic cleavage to 5'-phosphomonoester.. Its function is as follows. Endonuclease that specifically degrades the RNA of RNA-DNA hybrids. The sequence is that of Ribonuclease H from Polynucleobacter asymbioticus (strain DSM 18221 / CIP 109841 / QLW-P1DMWA-1) (Polynucleobacter necessarius subsp. asymbioticus).